A 212-amino-acid polypeptide reads, in one-letter code: Peptide methionine sulfoxide reductase MsrA (212 aa).

The active site involves cysteine 52.

The protein belongs to the MsrA Met sulfoxide reductase family.

It catalyses the reaction L-methionyl-[protein] + [thioredoxin]-disulfide + H2O = L-methionyl-(S)-S-oxide-[protein] + [thioredoxin]-dithiol. It carries out the reaction [thioredoxin]-disulfide + L-methionine + H2O = L-methionine (S)-S-oxide + [thioredoxin]-dithiol. Its function is as follows. Has an important function as a repair enzyme for proteins that have been inactivated by oxidation. Catalyzes the reversible oxidation-reduction of methionine sulfoxide in proteins to methionine. This chain is Peptide methionine sulfoxide reductase MsrA, found in Shigella dysenteriae serotype 1 (strain Sd197).